Consider the following 356-residue polypeptide: Serpentine receptor class epsilon-29 (356 aa).

Helical transmembrane passes span 29–49 (IVEL…IYII), 61–81 (ILAI…LITI), 119–139 (LLIF…FGVL), 161–181 (LFIP…TSLA), 190–210 (FLAQ…YFFV), 251–271 (LVFV…ALFY), and 281–301 (FVEN…IFSV).

The protein belongs to the nematode receptor-like protein sre family.

It localises to the membrane. The sequence is that of Serpentine receptor class epsilon-29 (sre-29) from Caenorhabditis elegans.